The primary structure comprises 332 residues: Glyceraldehyde-3-phosphate dehydrogenase (332 aa).

Residues 12 to 13 (RI), Asp-34, Lys-78, and Thr-120 each bind NAD(+). D-glyceraldehyde 3-phosphate-binding positions include 149–151 (SCT), Thr-180, 209–210 (TG), and Arg-232. Cys-150 serves as the catalytic Nucleophile. Asn-314 serves as a coordination point for NAD(+).

This sequence belongs to the glyceraldehyde-3-phosphate dehydrogenase family. In terms of assembly, homotetramer.

It localises to the cytoplasm. It catalyses the reaction D-glyceraldehyde 3-phosphate + phosphate + NAD(+) = (2R)-3-phospho-glyceroyl phosphate + NADH + H(+). The protein operates within carbohydrate degradation; glycolysis; pyruvate from D-glyceraldehyde 3-phosphate: step 1/5. In terms of biological role, catalyzes the oxidative phosphorylation of glyceraldehyde 3-phosphate (G3P) to 1,3-bisphosphoglycerate (BPG) using the cofactor NAD. The first reaction step involves the formation of a hemiacetal intermediate between G3P and a cysteine residue, and this hemiacetal intermediate is then oxidized to a thioester, with concomitant reduction of NAD to NADH. The reduced NADH is then exchanged with the second NAD, and the thioester is attacked by a nucleophilic inorganic phosphate to produce BPG. In Buchnera aphidicola subsp. Schizaphis graminum (strain Sg), this protein is Glyceraldehyde-3-phosphate dehydrogenase (gapA).